A 307-amino-acid chain; its full sequence is Phospho-N-acetylmuramoyl-pentapeptide-transferase (307 aa).

10 consecutive transmembrane segments (helical) span residues 3–23 (IILF…KYWI), 47–67 (SGTP…FLFF), 71–91 (FFPS…DFKL), 105–125 (IFLS…DYKI), 137–157 (IFYV…INLT), 162–182 (GLAG…NFQF), 186–206 (LTLE…FNSH), 210–230 (IFMG…LSII), 237–257 (LVFL…QVFF), and 285–305 (VVWR…ILWN).

Belongs to the glycosyltransferase 4 family. MraY subfamily. Requires Mg(2+) as cofactor.

The protein resides in the cell inner membrane. It catalyses the reaction UDP-N-acetyl-alpha-D-muramoyl-L-alanyl-gamma-D-glutamyl-meso-2,6-diaminopimeloyl-D-alanyl-D-alanine + di-trans,octa-cis-undecaprenyl phosphate = di-trans,octa-cis-undecaprenyl diphospho-N-acetyl-alpha-D-muramoyl-L-alanyl-D-glutamyl-meso-2,6-diaminopimeloyl-D-alanyl-D-alanine + UMP. Its pathway is cell wall biogenesis; peptidoglycan biosynthesis. In terms of biological role, catalyzes the initial step of the lipid cycle reactions in the biosynthesis of the cell wall peptidoglycan: transfers peptidoglycan precursor phospho-MurNAc-pentapeptide from UDP-MurNAc-pentapeptide onto the lipid carrier undecaprenyl phosphate, yielding undecaprenyl-pyrophosphoryl-MurNAc-pentapeptide, known as lipid I. The sequence is that of Phospho-N-acetylmuramoyl-pentapeptide-transferase from Dictyoglomus turgidum (strain DSM 6724 / Z-1310).